The sequence spans 31 residues: Monocyclic monoterpene ketone monooxygenase (31 aa).

Gly-20–Gly-25 provides a ligand contact to FAD.

Monomer. FAD is required as a cofactor.

It carries out the reaction 1-hydroxylimonen-2-one + NADPH + O2 = 3-isopropenyl-6-oxoheptanoate + NADP(+) + H2O. The enzyme catalyses (1R,4S)-1-hydroxylimonen-2-one + NADPH + O2 + H(+) = (4S,7S)-7-hydroxy-4-isopropenyl-7-methyloxepan-2-one + NADP(+) + H2O. The catalysed reaction is (1S,4R)-1-hydroxylimonen-2-one + NADPH + O2 + H(+) = (4R,7R)-7-hydroxy-4-isopropenyl-7-methyloxepan-2-one + NADP(+) + H2O. It catalyses the reaction (1R,4R)-dihydrocarvone + NADPH + O2 + H(+) = (4R,7R)-4-isopropenyl-7-methyloxepan-2-one + NADP(+) + H2O. It carries out the reaction (1S,4R)-menthone + NADPH + O2 + H(+) = (4S,7R)-7-isopropyl-4-methyloxepan-2-one + NADP(+) + H2O. The enzyme catalyses (1R,4S)-menthone + NADPH + O2 + H(+) = (4R,7S)-7-isopropyl-4-methyloxepan-2-one + NADP(+) + H2O. The catalysed reaction is (1S,4R)-isodihydrocarvone + NADPH + O2 + H(+) = (3S,6R)-6-isopropenyl-3-methyloxepan-2-one + NADP(+) + H2O. It participates in terpene metabolism; monoterpene degradation. Catalyzes the NADPH- and oxygen-dependent oxidation of the monocyclic monoterpene ketones 1-hydroxy-2-oxolimonene, dihydrocarvone and menthone. Is able to convert all enantiomers of these natural substrates with almost equal efficiency. Is thus involved in the conversion of the monocyclic monoterpene ketone intermediates formed in the degradation pathways of all stereoisomers of three different monocyclic monoterpenes, i.e. limonene, (dihydro)carveol and menthol, which likely make R.erythropolis able to grow on these compounds as the sole source of carbon and energy. This is Monocyclic monoterpene ketone monooxygenase from Rhodococcus erythropolis (Arthrobacter picolinophilus).